We begin with the raw amino-acid sequence, 443 residues long: MDTLASLYTKHLATLQQRARTILERHQLDGLLIHSGEPIARFLDDQDYPFKINPYFKAWVPVTQVPNCWLWIDGVNKPKLWFYSPLDYWHSVSPLPQAFWTEQVEMTAQRHADDIAALLPAARGNVAYIGPNAERARSLGIDEAHQNPQAVLNFLHYHRAYKSEYEQACMREAQKIAVDGHQAALEAFRAGMSEFDINLAYLSATGQGENDVPYDNIIALNRHAAVLHYTHLERRAPSEMHSFLIDAGAEFHGYAADLTRTYAANGQSDFAALVAEVNQAQQALIATLQTGVRYTDYNLQFHQRLAAILRHHHILTGISDEAAVAQGLTTPFLPHGLGHPLGLQVHDVAGFMQDELGTQMAAPDRYPYLRCTRIMEPGMVMTIEPGLYFIDTLLAPWLEGEFGQHFNRGRIDALRPYGGIRIEDNVIFHAHGVENMTRDLHLA.

Residues Asp246, Asp257, His339, Glu384, and Glu423 each contribute to the Mn(2+) site.

Belongs to the peptidase M24B family. Bacterial-type prolidase subfamily. Mn(2+) is required as a cofactor.

The catalysed reaction is Xaa-L-Pro dipeptide + H2O = an L-alpha-amino acid + L-proline. Functionally, splits dipeptides with a prolyl residue in the C-terminal position. The polypeptide is Xaa-Pro dipeptidase (Edwardsiella ictaluri (strain 93-146)).